The chain runs to 179 residues: Large ribosomal subunit protein uL6 (179 aa).

The protein belongs to the universal ribosomal protein uL6 family. In terms of assembly, part of the 50S ribosomal subunit.

In terms of biological role, this protein binds to the 23S rRNA, and is important in its secondary structure. It is located near the subunit interface in the base of the L7/L12 stalk, and near the tRNA binding site of the peptidyltransferase center. In Acidothermus cellulolyticus (strain ATCC 43068 / DSM 8971 / 11B), this protein is Large ribosomal subunit protein uL6.